A 330-amino-acid polypeptide reads, in one-letter code: Peroxidase 70 (330 aa).

The N-terminal stretch at 1–24 (MRSFTNLNPCYVLLPFFLVLATNA) is a signal peptide. 4 cysteine pairs are disulfide-bonded: C43-C119, C76-C81, C125-C326, and C202-C234. The active-site Proton acceptor is the H74. Ca(2+) is bound by residues D75, V78, G80, D82, and S84. A substrate-binding site is contributed by P165. Residue H195 participates in heme b binding. Residue T196 participates in Ca(2+) binding. Positions 247, 250, and 255 each coordinate Ca(2+).

It belongs to the peroxidase family. Classical plant (class III) peroxidase subfamily. The cofactor is heme b. Ca(2+) serves as cofactor.

The protein localises to the secreted. It catalyses the reaction 2 a phenolic donor + H2O2 = 2 a phenolic radical donor + 2 H2O. Removal of H(2)O(2), oxidation of toxic reductants, biosynthesis and degradation of lignin, suberization, auxin catabolism, response to environmental stresses such as wounding, pathogen attack and oxidative stress. These functions might be dependent on each isozyme/isoform in each plant tissue. The polypeptide is Peroxidase 70 (PER70) (Arabidopsis thaliana (Mouse-ear cress)).